Here is a 118-residue protein sequence, read N- to C-terminus: Ribonuclease P protein component (118 aa).

This sequence belongs to the RnpA family. As to quaternary structure, consists of a catalytic RNA component (M1 or rnpB) and a protein subunit.

It catalyses the reaction Endonucleolytic cleavage of RNA, removing 5'-extranucleotides from tRNA precursor.. Functionally, RNaseP catalyzes the removal of the 5'-leader sequence from pre-tRNA to produce the mature 5'-terminus. It can also cleave other RNA substrates such as 4.5S RNA. The protein component plays an auxiliary but essential role in vivo by binding to the 5'-leader sequence and broadening the substrate specificity of the ribozyme. This Shewanella putrefaciens (strain CN-32 / ATCC BAA-453) protein is Ribonuclease P protein component.